A 292-amino-acid polypeptide reads, in one-letter code: Acetyl-coenzyme A carboxylase carboxyl transferase subunit beta (292 aa).

The CoA carboxyltransferase N-terminal domain maps to 29–292 (LWVKCSECGQ…HGVKDLMGAN (264 aa)). The Zn(2+) site is built by Cys-33, Cys-36, Cys-52, and Cys-55. The C4-type zinc-finger motif lies at 33–55 (CSECGQVAYRKDLISNFNVCSNC).

This sequence belongs to the AccD/PCCB family. In terms of assembly, acetyl-CoA carboxylase is a heterohexamer composed of biotin carboxyl carrier protein (AccB), biotin carboxylase (AccC) and two subunits each of ACCase subunit alpha (AccA) and ACCase subunit beta (AccD). Zn(2+) is required as a cofactor.

It localises to the cytoplasm. The catalysed reaction is N(6)-carboxybiotinyl-L-lysyl-[protein] + acetyl-CoA = N(6)-biotinyl-L-lysyl-[protein] + malonyl-CoA. It participates in lipid metabolism; malonyl-CoA biosynthesis; malonyl-CoA from acetyl-CoA: step 1/1. In terms of biological role, component of the acetyl coenzyme A carboxylase (ACC) complex. Biotin carboxylase (BC) catalyzes the carboxylation of biotin on its carrier protein (BCCP) and then the CO(2) group is transferred by the transcarboxylase to acetyl-CoA to form malonyl-CoA. The protein is Acetyl-coenzyme A carboxylase carboxyl transferase subunit beta of Prochlorococcus marinus (strain MIT 9515).